Reading from the N-terminus, the 234-residue chain is Glutathione S-transferase 1 (234 aa).

Positions 3–90 (LPIIKVHWLD…YVLQHFDHSH (88 aa)) constitute a GST N-terminal domain. Residues 96-234 (DADIADQINY…EKARALGSNF (139 aa)) enclose the GST C-terminal domain.

This sequence belongs to the GST superfamily. In terms of assembly, homodimer.

The protein localises to the endoplasmic reticulum membrane. It catalyses the reaction RX + glutathione = an S-substituted glutathione + a halide anion + H(+). The protein is Glutathione S-transferase 1 (GTT1) of Saccharomyces cerevisiae (strain ATCC 204508 / S288c) (Baker's yeast).